The primary structure comprises 384 residues: Heparin lyase I (384 aa).

Residues 1-21 form the signal peptide; sequence MKKQILYLIVLQQLFLCSAYA. Position 22 is a blocked amino end (Gln) (glutamine 22). O-linked (Man...) serine glycosylation occurs at serine 39.

As to quaternary structure, monomer. In terms of processing, the N-terminus is blocked.

It is found in the periplasm. The enzyme catalyses Eliminative cleavage of polysaccharides containing (1-&gt;4)-linked D-glucuronate or L-iduronate residues and (1-&gt;4)-alpha-linked 2-sulfoamino-2-deoxy-6-sulfo-D-glucose residues to give oligosaccharides with terminal 4-deoxy-alpha-D-gluc-4-enuronosyl groups at their non-reducing ends.. In terms of biological role, degrades heparin and heparan sulfate. Also implicated in the release of heparin-bound growth factors from the extracellular matrix. This is Heparin lyase I from Pedobacter heparinus (Flavobacterium heparinum).